Consider the following 841-residue polypeptide: Probable outer membrane usher protein EcpC (841 aa).

An N-terminal signal peptide occupies residues 1–29 (MPLRRFSPGLKAQFAFGMVFLFVQPDASA).

This sequence belongs to the EcpC/MatD family.

Its function is as follows. Part of the ecpRABCDE operon, which encodes the E.coli common pilus (ECP). ECP is found in both commensal and pathogenic strains and plays a dual role in early-stage biofilm development and host cell recognition. The polypeptide is Probable outer membrane usher protein EcpC (ecpC) (Escherichia coli O127:H6 (strain E2348/69 / EPEC)).